A 111-amino-acid chain; its full sequence is Ferredoxin-thioredoxin reductase, catalytic chain (111 aa).

C52 is a binding site for [4Fe-4S] cluster. The active-site Nucleophile is C54. Cysteines 54 and 84 form a disulfide. Residues C71, C73, and C82 each contribute to the [4Fe-4S] cluster site.

Belongs to the ferredoxin thioredoxin reductase beta subunit family. In terms of assembly, heterodimer of subunit A (variable subunit) and subunit B (catalytic subunit). Heterodimeric FTR forms a complex with ferredoxin and thioredoxin. [4Fe-4S] cluster is required as a cofactor.

It localises to the plastid. The protein localises to the chloroplast. It carries out the reaction [thioredoxin]-disulfide + 2 reduced [2Fe-2S]-[ferredoxin] + 2 H(+) = [thioredoxin]-dithiol + 2 oxidized [2Fe-2S]-[ferredoxin]. Functionally, catalytic subunit of the ferredoxin-thioredoxin reductase (FTR), which catalyzes the two-electron reduction of thioredoxins by the electrons provided by reduced ferredoxin. This is Ferredoxin-thioredoxin reductase, catalytic chain (ftrB) from Cyanidium caldarium (Red alga).